A 332-amino-acid polypeptide reads, in one-letter code: Ketol-acid reductoisomerase (NADP(+)) (332 aa).

The KARI N-terminal Rossmann domain maps to Ala-2–Thr-182. Residues Tyr-25–Gln-28, Ser-51, Ser-53, and Asp-83–Gln-86 each bind NADP(+). The active site involves His-108. Gly-134 is a binding site for NADP(+). In terms of domain architecture, KARI C-terminal knotted spans Thr-183–Leu-327. The Mg(2+) site is built by Asp-191, Glu-195, Glu-227, and Glu-231. Ser-252 serves as a coordination point for substrate.

Belongs to the ketol-acid reductoisomerase family. It depends on Mg(2+) as a cofactor.

It catalyses the reaction (2R)-2,3-dihydroxy-3-methylbutanoate + NADP(+) = (2S)-2-acetolactate + NADPH + H(+). It carries out the reaction (2R,3R)-2,3-dihydroxy-3-methylpentanoate + NADP(+) = (S)-2-ethyl-2-hydroxy-3-oxobutanoate + NADPH + H(+). It functions in the pathway amino-acid biosynthesis; L-isoleucine biosynthesis; L-isoleucine from 2-oxobutanoate: step 2/4. The protein operates within amino-acid biosynthesis; L-valine biosynthesis; L-valine from pyruvate: step 2/4. Involved in the biosynthesis of branched-chain amino acids (BCAA). Catalyzes an alkyl-migration followed by a ketol-acid reduction of (S)-2-acetolactate (S2AL) to yield (R)-2,3-dihydroxy-isovalerate. In the isomerase reaction, S2AL is rearranged via a Mg-dependent methyl migration to produce 3-hydroxy-3-methyl-2-ketobutyrate (HMKB). In the reductase reaction, this 2-ketoacid undergoes a metal-dependent reduction by NADPH to yield (R)-2,3-dihydroxy-isovalerate. This is Ketol-acid reductoisomerase (NADP(+)) from Persephonella marina (strain DSM 14350 / EX-H1).